The chain runs to 148 residues: Large-conductance mechanosensitive channel (148 aa).

The next 2 helical transmembrane spans lie at 16–36 (VMDL…VNSI) and 89–109 (GSFI…FLMV).

Belongs to the MscL family. In terms of assembly, homopentamer.

It localises to the cell inner membrane. Its function is as follows. Channel that opens in response to stretch forces in the membrane lipid bilayer. May participate in the regulation of osmotic pressure changes within the cell. The polypeptide is Large-conductance mechanosensitive channel (Paraburkholderia xenovorans (strain LB400)).